Reading from the N-terminus, the 576-residue chain is Type II restriction enzyme BsuRI (576 aa).

As to quaternary structure, monomer. It depends on Mg(2+) as a cofactor.

It carries out the reaction Endonucleolytic cleavage of DNA to give specific double-stranded fragments with terminal 5'-phosphates.. Functionally, a P subtype restriction enzyme that recognizes the double-stranded sequence 5'-GGCC-3' and cleaves after G-2. The chain is Type II restriction enzyme BsuRI (hsdRR) from Bacillus subtilis.